Here is a 35-residue protein sequence, read N- to C-terminus: Conotoxin Cal6.1f (35 aa).

Positions 1-8 (GLIRPSKR) are excised as a propeptide. Intrachain disulfides connect cysteine 9-cysteine 25, cysteine 16-cysteine 29, and cysteine 24-cysteine 34.

This sequence belongs to the conotoxin O1 superfamily. Expressed by the venom duct.

The protein resides in the secreted. In terms of biological role, probable neurotoxin with unknown target. Possibly targets ion channels. This Californiconus californicus (California cone) protein is Conotoxin Cal6.1f.